An 82-amino-acid polypeptide reads, in one-letter code: Cytochrome b559 subunit alpha (82 aa).

The helical transmembrane segment at V21–W35 threads the bilayer. H23 is a heme binding site.

It belongs to the PsbE/PsbF family. In terms of assembly, heterodimer of an alpha subunit and a beta subunit. PSII is composed of 1 copy each of membrane proteins PsbA, PsbB, PsbC, PsbD, PsbE, PsbF, PsbH, PsbI, PsbJ, PsbK, PsbL, PsbM, PsbT, PsbX, PsbY, PsbZ, Psb30/Ycf12, peripheral proteins PsbO, CyanoQ (PsbQ), PsbU, PsbV and a large number of cofactors. It forms dimeric complexes. Heme b is required as a cofactor.

The protein resides in the cellular thylakoid membrane. In terms of biological role, this b-type cytochrome is tightly associated with the reaction center of photosystem II (PSII). PSII is a light-driven water:plastoquinone oxidoreductase that uses light energy to abstract electrons from H(2)O, generating O(2) and a proton gradient subsequently used for ATP formation. It consists of a core antenna complex that captures photons, and an electron transfer chain that converts photonic excitation into a charge separation. This Nostoc sp. (strain PCC 7120 / SAG 25.82 / UTEX 2576) protein is Cytochrome b559 subunit alpha.